A 152-amino-acid chain; its full sequence is MFRGASAINLDTKGRIAIPVRYREPLQLEHQGRIVITVDIQSACLLLYPIHEWELIEAKLLKLSDTDKTQRSLKRMLLGYAHEVELDGNGRILLPPPLRQYANLDKRIMLVGQLNKFELWDEQAWLQQIDECQETIRSEELANNERLADFSL.

SpoVT-AbrB domains lie at 5–52 (ASAI…PIHE) and 81–124 (AHEV…DEQA).

It belongs to the MraZ family. In terms of assembly, forms oligomers.

It localises to the cytoplasm. Its subcellular location is the nucleoid. The protein is Transcriptional regulator MraZ of Shewanella sp. (strain ANA-3).